Here is a 340-residue protein sequence, read N- to C-terminus: uncharacterized protein (340 aa).

The disordered stretch occupies residues 284–340 (DHSTPTNYQQETPASQQQLDQENEPIKPSKKSNSSSLPRGTTQPKSNSINRVSKLID). Composition is skewed to polar residues over residues 286–303 (STPT…QQLD) and 320–334 (LPRG…SINR).

This is an uncharacterized protein from Mycoplasma genitalium (strain ATCC 33530 / DSM 19775 / NCTC 10195 / G37) (Mycoplasmoides genitalium).